We begin with the raw amino-acid sequence, 346 residues long: N-acetyl-gamma-glutamyl-phosphate reductase (346 aa).

The active site involves Cys150.

This sequence belongs to the NAGSA dehydrogenase family. Type 1 subfamily.

The protein resides in the cytoplasm. The enzyme catalyses N-acetyl-L-glutamate 5-semialdehyde + phosphate + NADP(+) = N-acetyl-L-glutamyl 5-phosphate + NADPH + H(+). It functions in the pathway amino-acid biosynthesis; L-arginine biosynthesis; N(2)-acetyl-L-ornithine from L-glutamate: step 3/4. Catalyzes the NADPH-dependent reduction of N-acetyl-5-glutamyl phosphate to yield N-acetyl-L-glutamate 5-semialdehyde. The polypeptide is N-acetyl-gamma-glutamyl-phosphate reductase (Brevibacillus brevis (strain 47 / JCM 6285 / NBRC 100599)).